The chain runs to 316 residues: Beta-ketoacyl-[acyl-carrier-protein] synthase III 4 (316 aa).

Residues C114 and H242 contribute to the active site. Positions 243-247 (QANLR) are ACP-binding. Residue N272 is part of the active site.

Belongs to the thiolase-like superfamily. FabH family. Homodimer.

Its subcellular location is the cytoplasm. The enzyme catalyses malonyl-[ACP] + acetyl-CoA + H(+) = 3-oxobutanoyl-[ACP] + CO2 + CoA. The protein operates within lipid metabolism; fatty acid biosynthesis. In terms of biological role, catalyzes the condensation reaction of fatty acid synthesis by the addition to an acyl acceptor of two carbons from malonyl-ACP. Catalyzes the first condensation reaction which initiates fatty acid synthesis and may therefore play a role in governing the total rate of fatty acid production. Possesses both acetoacetyl-ACP synthase and acetyl transacylase activities. Its substrate specificity determines the biosynthesis of branched-chain and/or straight-chain of fatty acids. The polypeptide is Beta-ketoacyl-[acyl-carrier-protein] synthase III 4 (Streptomyces coelicolor (strain ATCC BAA-471 / A3(2) / M145)).